We begin with the raw amino-acid sequence, 196 residues long: MTLQCTKSAGHWRVVVWDEEGFQGRRHEFTAECPSVLDLGFETVRSLKVLSGAWVGFEHAGFQGQQYVLERGDYPGWDAWGGNTAYPAERLTSFRPVACANHRDSRLTIFEQENFLGRKGELSDDYPSLQAMGWDGTEVGSFHVQSGAWVCSQFPGYRGFQYVLESDHHSGDYKHFREWGSHAHTFQVQSVRRIQQ.

Thr2 carries the post-translational modification N-acetylthreonine. The segment at 2 to 11 is N-terminal arm; it reads TLQCTKSAGH. Beta/gamma crystallin 'Greek key' domains lie at 12–51 and 52–98; these read WRVV…KVLS and GAWV…RPVA. Residues 99-104 are connecting peptide; sequence CANHRD. Beta/gamma crystallin 'Greek key' domains lie at 105–146 and 147–195; these read SRLT…HVQS and GAWV…RRIQ.

Homo/heterodimer, or complexes of higher-order. The structure of beta-crystallin oligomers seems to be stabilized through interactions between the N-terminal arms.

In terms of biological role, crystallins are the dominant structural components of the vertebrate eye lens. This is Beta-crystallin A4 (Cryba4) from Rattus norvegicus (Rat).